Consider the following 109-residue polypeptide: Nucleoid-associated protein A1S_1684 (109 aa).

This sequence belongs to the YbaB/EbfC family. In terms of assembly, homodimer.

It is found in the cytoplasm. It localises to the nucleoid. Its function is as follows. Binds to DNA and alters its conformation. May be involved in regulation of gene expression, nucleoid organization and DNA protection. The chain is Nucleoid-associated protein A1S_1684 from Acinetobacter baumannii (strain ATCC 17978 / DSM 105126 / CIP 53.77 / LMG 1025 / NCDC KC755 / 5377).